The primary structure comprises 603 residues: Penicillin-binding protein activator LpoA (603 aa).

A signal peptide spans 1–24; the sequence is MINHKRLSVPRILTPVALAITLAA. Cysteine 25 carries N-palmitoyl cysteine lipidation. Cysteine 25 carries the S-diacylglycerol cysteine lipid modification.

It belongs to the LpoA family. As to quaternary structure, interacts with PBP1a.

It localises to the cell outer membrane. Functionally, regulator of peptidoglycan synthesis that is essential for the function of penicillin-binding protein 1A (PBP1a). The polypeptide is Penicillin-binding protein activator LpoA (Vibrio antiquarius (strain Ex25)).